Here is a 425-residue protein sequence, read N- to C-terminus: Ribosome biogenesis protein WDR12 homolog (425 aa).

The segment at isoleucine 7–glutamate 93 is ubiquitin-like (UBL) domain. WD repeat units lie at residues isoleucine 105 to threonine 142, glycine 145 to glutamate 187, glycine 194 to aspartate 233, glycine 265 to glutamine 303, alanine 305 to valine 344, serine 350 to tyrosine 390, and glycine 394 to lysine 425. The tract at residues proline 227–lysine 253 is disordered. A compositionally biased stretch (basic and acidic residues) spans aspartate 231 to lysine 253.

Belongs to the WD repeat WDR12/YTM1 family.

Its subcellular location is the nucleus. The protein localises to the nucleolus. It localises to the nucleoplasm. Required for maturation of ribosomal RNAs and formation of the large ribosomal subunit. In Ixodes scapularis (Black-legged tick), this protein is Ribosome biogenesis protein WDR12 homolog.